Reading from the N-terminus, the 446-residue chain is Probable ribosomal RNA small subunit methyltransferase B (446 aa).

S-adenosyl-L-methionine is bound by residues 260–266, D284, D311, and D330; that span reads CAAPGGK. C383 functions as the Nucleophile in the catalytic mechanism.

This sequence belongs to the class I-like SAM-binding methyltransferase superfamily. RsmB/NOP family.

It is found in the cytoplasm. The enzyme catalyses cytidine(967) in 16S rRNA + S-adenosyl-L-methionine = 5-methylcytidine(967) in 16S rRNA + S-adenosyl-L-homocysteine + H(+). Its function is as follows. Specifically methylates the cytosine at position 967 (m5C967) of 16S rRNA. This is Probable ribosomal RNA small subunit methyltransferase B from Synechocystis sp. (strain ATCC 27184 / PCC 6803 / Kazusa).